Here is a 171-residue protein sequence, read N- to C-terminus: Putative metal-dependent hydrolase BH0277 (171 aa).

The Zn(2+) site is built by H64, H155, and H159.

It belongs to the metal hydrolase YfiT family. In terms of assembly, homodimer. It depends on Zn(2+) as a cofactor.

The protein localises to the cytoplasm. Functionally, possible metal-dependent hydrolase. The polypeptide is Putative metal-dependent hydrolase BH0277 (Halalkalibacterium halodurans (strain ATCC BAA-125 / DSM 18197 / FERM 7344 / JCM 9153 / C-125) (Bacillus halodurans)).